The primary structure comprises 729 residues: Ubiquitin carboxyl-terminal hydrolase BAP1 (729 aa).

Residues 4–235 form the UCH catalytic domain; that stretch reads GWLELESDPG…IRFNLMAVVP (232 aa). The Arg-finger motif motif lies at 56-60; that stretch reads RRSRR. Residue Cys-91 is the Nucleophile of the active site. Residue His-169 is the Proton donor of the active site. Phosphoserine is present on Ser-292. Residues 301 to 351 form a disordered region; it reads APAASEGNHTDGAEEAAGSCAQAPSHSPPNKPKLVVKPPGSSLNGVHPNPT. An HBM-like motif motif is present at residues 363-366; it reads NHNY. Residues Ser-369 and Ser-395 each carry the phosphoserine modification. 2 disordered regions span residues 372 to 435 and 464 to 524; these read QEEE…SADG and SIKT…SPVT. Residues 395–409 show a composition bias toward acidic residues; the sequence is SDDEDDYEDDEEDDV. Residues 480–524 show a composition bias toward polar residues; it reads THSQPSPTPSNESTDTASEIGSAFNSPLRSPIRSANPTRPSSPVT. Residue Thr-493 is modified to Phosphothreonine. 4 positions are modified to phosphoserine: Ser-521, Ser-537, Ser-585, and Ser-597. Residues 575-623 form a disordered region; that stretch reads LTEGGKGSSPSIRPIQGSQGSSSPVEKEVVEATDSREKTGMVRPGEPLS. A compositionally biased stretch (polar residues) spans 582 to 598; sequence SSPSIRPIQGSQGSSSP. An interaction with BRCA1 region spans residues 596–721; sequence SSPVEKEVVE…QRKPDRRKRS (126 aa). Residues 599–614 show a composition bias toward basic and acidic residues; it reads VEKEVVEATDSREKTG. Residues 636–656 are a coiled coil; that stretch reads LKCVEAEIANYEACLKEEVEK. The segment at 642-686 is interaction with YY1; the sequence is EIANYEACLKEEVEKRKKFKIDDQRRTHNYDEFICTFISMLAQEG. Residues 670–698 enclose the ULD domain; sequence NYDEFICTFISMLAQEGMLANLVEQNISV. Positions 699 to 701 are interaction with nucleosomal DNA forming a DNA clamp with ASXL1; that stretch reads RRR. The Classical bipartite Nuclear localization signal (NLS) signature appears at 699–722; it reads RRRQGVSIGRLHKQRKPDRRKRSR. The disordered stretch occupies residues 703–729; it reads GVSIGRLHKQRKPDRRKRSRPYKAKRQ. The interval 713–729 is positively charged C-terminal extension (CTE); the sequence is RKPDRRKRSRPYKAKRQ. Residues 717–724 carry the Non-classical PY-nuclear localization signal (PY-NLS) motif; that stretch reads RRKRSRPY.

This sequence belongs to the peptidase C12 family. BAP1 subfamily. As to quaternary structure, core component of the polycomb repressive deubiquitinase (PR-DUB) complex, at least composed of BAP1, one of ASXL1, ASXL2 or (probably) ASXL3, and one of MBD5 or MBD6. The PR-DUB core associates with a number of accessory proteins, including FOXK1, FOXK2, KDM1B, HCFC1, YY1 and OGT; KDM1B specifically associates with ASXL2 PR-DUB complexes. The BAP1 deubiquitinase activity is not required for PR-DUB assembly. Homodimerizes (via coiled-coil hinge-region between the UCH and ULD domains) to mediate assembly of 2 copies of the BAP1-ASXL heterodimer into a bisymmetric tetramer; dimerization enhances association with nucleosomes. The PR-DUB complex associates with nucleosomes to mediate deubiquitination of 'lys-120' of histone H2AK118ub1 substrates; the association requires the positively charged C-terminal tail of BAP1. Interacts (via ULD domain) with ASXL1 (via DEUBAD domain); the interaction is direct and forms a ubiquitin binding cleft. The interaction with ASXL1 stabilizes BAP1 but is not required for nucleosome binding. Associates (via C-terminus) with nucleosome and chromatosome complexes through direct interaction with DNA and the histone3/4 dimer; this association displaces the histone-2A C-terminal tail, extending and orienting the H2AK118ub1 substrate towards the BAP1 deubiquitinase active site. Also interacts (via arginine finger) directly with the histone H2A-H2B acidic patch; this interaction is not critical for nucleosome-chromatosome association but may play a role in orienting the H2AK118ub1 substrate towards the PR-DUB complex active site. Interacts with BRCA1 (via the RING finger). Interacts (via HBM-like motif) with HCFC1. Interacts (via a C-terminal region overlapping the ULD domain) with YY1; the interaction is direct and requires the interaction with HCFC1. Interacts (when phosphorylated at Thr-493) with FOXK1. Interacts (when phosphorylated at Thr-493) with FOXK2; leading to recruitment of the PR-DUB complex and repression of FOXK2 target genes. Interacts (via non-classical PY-NLS) with TNPO1/transportin-1 (via HEAT repeats 8-12); the interaction is direct, mediates BAP1 nuclear localization and disrupts BAP1 homodimerization. Interacts (via C-terminus) with KPNA1/importin alpha5 and KPNA2/importin alpha1; these interactions can contribute to BAP1 nuclear localization but are less important than the interaction with TNPO1/transportin-1. The interaction with TNPO1/transportin-1 disrupts homodimerization and blocks ubiquitination by UBE2O. In terms of processing, ubiquitinated: monoubiquitinated at multiple sites within its nuclear localization signal (NLS) BY UBE2O, leading to cytoplasmic retention. Able to mediate autodeubiquitination via intramolecular interactions to counteract cytoplasmic retention. Monoubiquitinated on at least 4 sites near or within its PY-NLS. Highly expressed in testis, placenta and ovary. Expressed in breast. levels in the placenta increase over the course of pregnancy.

Its subcellular location is the cytoplasm. It localises to the nucleus. The protein resides in the chromosome. It carries out the reaction Thiol-dependent hydrolysis of ester, thioester, amide, peptide and isopeptide bonds formed by the C-terminal Gly of ubiquitin (a 76-residue protein attached to proteins as an intracellular targeting signal).. Deubiquitinating enzyme that plays a key role in chromatin by mediating deubiquitination of histone H2A and HCFC1. Catalytic component of the polycomb repressive deubiquitinase (PR-DUB) complex, a complex that specifically mediates deubiquitination of histone H2A monoubiquitinated at 'Lys-120' (H2AK119ub1). Does not deubiquitinate monoubiquitinated histone H2B. The PR-DUB complex is an epigenetic regulator of gene expression and acts as a transcriptional coactivator, affecting genes involved in development, cell communication, signaling, cell proliferation and cell viability. Antagonizes PRC1 mediated H2AK119ub1 monoubiquitination. As part of the PR-DUB complex, associates with chromatin enriched in histone marks H3K4me1, H3K4me3, and H3K27Ac, but not in H3K27me3. Recruited to specific gene-regulatory regions by YY1. Acts as a regulator of cell growth by mediating deubiquitination of HCFC1 N-terminal and C-terminal chains, with some specificity toward 'Lys-48'-linked polyubiquitin chains compared to 'Lys-63'-linked polyubiquitin chains. Deubiquitination of HCFC1 does not lead to increase stability of HCFC1. Interferes with the BRCA1 and BARD1 heterodimer activity by inhibiting their ability to mediate ubiquitination and autoubiquitination. It however does not mediate deubiquitination of BRCA1 and BARD1. Able to mediate autodeubiquitination via intramolecular interactions to counteract monoubiquitination at the nuclear localization signal (NLS), thereby protecting it from cytoplasmic sequestration. Negatively regulates epithelial-mesenchymal transition (EMT) of trophoblast stem cells during placental development by regulating genes involved in epithelial cell integrity, cell adhesion and cytoskeletal organization. The sequence is that of Ubiquitin carboxyl-terminal hydrolase BAP1 from Homo sapiens (Human).